The sequence spans 158 residues: Cyclic pyranopterin monophosphate synthase (158 aa).

Substrate-binding positions include 75-77 (LCH) and 113-114 (ME). Aspartate 128 is an active-site residue.

Belongs to the MoaC family. Homohexamer; trimer of dimers.

It catalyses the reaction (8S)-3',8-cyclo-7,8-dihydroguanosine 5'-triphosphate = cyclic pyranopterin phosphate + diphosphate. It participates in cofactor biosynthesis; molybdopterin biosynthesis. Its function is as follows. Catalyzes the conversion of (8S)-3',8-cyclo-7,8-dihydroguanosine 5'-triphosphate to cyclic pyranopterin monophosphate (cPMP). This Ralstonia pickettii (strain 12J) protein is Cyclic pyranopterin monophosphate synthase.